A 178-amino-acid polypeptide reads, in one-letter code: Cytochrome b6-f complex subunit 4 (178 aa).

The next 3 membrane-spanning stretches (helical) occupy residues 36 to 56 (LSYIFPVVILGTIACTIGLAV), 95 to 115 (LLGVLLMASVPAGSLTVPFLE), and 131 to 151 (TVSLIGTAVALWLGIGAALPI).

This sequence belongs to the cytochrome b family. PetD subfamily. In terms of assembly, the 4 large subunits of the cytochrome b6-f complex are cytochrome b6, subunit IV (17 kDa polypeptide, petD), cytochrome f and the Rieske protein, while the 4 small subunits are petG, petL, petM and petN. The complex functions as a dimer.

The protein resides in the plastid. The protein localises to the chloroplast thylakoid membrane. Component of the cytochrome b6-f complex, which mediates electron transfer between photosystem II (PSII) and photosystem I (PSI), cyclic electron flow around PSI, and state transitions. The polypeptide is Cytochrome b6-f complex subunit 4 (Picea abies (Norway spruce)).